The primary structure comprises 143 residues: Large ribosomal subunit protein uL11 (143 aa).

Belongs to the universal ribosomal protein uL11 family. In terms of assembly, part of the ribosomal stalk of the 50S ribosomal subunit. Interacts with L10 and the large rRNA to form the base of the stalk. L10 forms an elongated spine to which L12 dimers bind in a sequential fashion forming a multimeric L10(L12)X complex. One or more lysine residues are methylated.

Functionally, forms part of the ribosomal stalk which helps the ribosome interact with GTP-bound translation factors. This is Large ribosomal subunit protein uL11 from Beutenbergia cavernae (strain ATCC BAA-8 / DSM 12333 / CCUG 43141 / JCM 11478 / NBRC 16432 / NCIMB 13614 / HKI 0122).